Reading from the N-terminus, the 472-residue chain is Phosphoenolpyruvate carboxykinase (ATP), glycosomal (472 aa).

Residue 221 to 228 (GLSGTGKT) coordinates ATP.

The protein belongs to the phosphoenolpyruvate carboxykinase (ATP) family. In terms of assembly, homodimer.

It localises to the glycosome. It catalyses the reaction oxaloacetate + ATP = phosphoenolpyruvate + ADP + CO2. It functions in the pathway carbohydrate biosynthesis; gluconeogenesis. This is Phosphoenolpyruvate carboxykinase (ATP), glycosomal (PEPCK) from Trypanosoma cruzi.